The primary structure comprises 382 residues: tRNA(Met) cytidine acetate ligase (382 aa).

ATP-binding positions include 9-22 (VTEY…HAYQ), glycine 103, asparagine 152, and arginine 177.

This sequence belongs to the TmcAL family.

Its subcellular location is the cytoplasm. It catalyses the reaction cytidine(34) in elongator tRNA(Met) + acetate + ATP = N(4)-acetylcytidine(34) in elongator tRNA(Met) + AMP + diphosphate. Functionally, catalyzes the formation of N(4)-acetylcytidine (ac(4)C) at the wobble position of elongator tRNA(Met), using acetate and ATP as substrates. First activates an acetate ion to form acetyladenylate (Ac-AMP) and then transfers the acetyl group to tRNA to form ac(4)C34. This is tRNA(Met) cytidine acetate ligase from Levilactobacillus brevis (strain ATCC 367 / BCRC 12310 / CIP 105137 / JCM 1170 / LMG 11437 / NCIMB 947 / NCTC 947) (Lactobacillus brevis).